Consider the following 545-residue polypeptide: Chaperonin GroEL (545 aa).

Residues 30-33, Lys-51, 87-91, Gly-415, and Asp-496 contribute to the ATP site; these read TLGP and DGTTT. Positions 526 to 545 are disordered; it reads PEPKAPAGGMPDMGGMGGMM. Residues 536-545 show a composition bias toward gly residues; that stretch reads PDMGGMGGMM.

This sequence belongs to the chaperonin (HSP60) family. In terms of assembly, forms a cylinder of 14 subunits composed of two heptameric rings stacked back-to-back. Interacts with the co-chaperonin GroES.

It is found in the cytoplasm. The catalysed reaction is ATP + H2O + a folded polypeptide = ADP + phosphate + an unfolded polypeptide.. Together with its co-chaperonin GroES, plays an essential role in assisting protein folding. The GroEL-GroES system forms a nano-cage that allows encapsulation of the non-native substrate proteins and provides a physical environment optimized to promote and accelerate protein folding. This Paracoccus denitrificans (strain Pd 1222) protein is Chaperonin GroEL.